The chain runs to 946 residues: Increased sodium tolerance protein 2 (946 aa).

The Cytoplasmic segment spans residues 1 to 121 (MSQTITSLDP…SNLTNNPKQS (121 aa)). The chain crosses the membrane as a helical span at residues 122 to 142 (LYFAFLQNYIKWLIPFSFFGL). Residues 143-153 (SIRFLSNFTYE) lie on the Extracellular side of the membrane. Residues 154 to 174 (FNSTYSLFAILWTLSFTAFWL) traverse the membrane as a helical segment. At 175-217 (YKYEPFWSDRLSKYSSFSTIEFLQDKQKAQKKASSVIMLKKCC) the chain is on the cytoplasmic side. Residues 218-238 (FIPVALLFGAILLSFQLYCFA) traverse the membrane as a helical segment. At 239–253 (LEIFIKQIYNGPMIS) the chain is on the extracellular side. Residues 254 to 274 (ILSFLPTILICTFTPVLTVIY) form a helical membrane-spanning segment. Over 275–302 (NKYFVEPMTKWENHSSVVNAKKSKEAKN) the chain is Cytoplasmic. Residues 303-323 (FVIIFLSSYVPLLITLFLYLP) form a helical membrane-spanning segment. At 324–447 (MGHLLTAEIR…DANFKKLLLQ (124 aa)) the chain is on the extracellular side. A helical membrane pass occupies residues 448–468 (FGYLVMFSTIWPLAPFICLIV). Topologically, residues 469-505 (NLIVYQVDLRKAVLYSKPEYFPFPIYDKPSSVSNTQK) are cytoplasmic. Residues 506–526 (LTVGLWNSVLVMFSILGCVIT) traverse the membrane as a helical segment. At 527 to 563 (ATLTYMYQSCNIPGVGAHTSIHTNKAWYLANPINHSW) the chain is on the extracellular side. A helical transmembrane segment spans residues 564 to 584 (INIVLYAVFIEHVSVAIFFLF). At 585-946 (SSILKSSHDD…GLLHKLKKKL (362 aa)) the chain is on the cytoplasmic side. 2 disordered regions span residues 617–638 (EKIP…RKGS) and 665–718 (THAN…TEKR). The span at 628–638 (NEKELVQRKGS) shows a compositional bias: basic and acidic residues. Ser-638 is subject to Phosphoserine. The span at 671–689 (PSSLSSASSPSLSSSSSSS) shows a compositional bias: low complexity. Thr-701 is subject to Phosphothreonine. Phosphoserine is present on residues Ser-704 and Ser-720. Phosphothreonine is present on Thr-726. Position 729 is a phosphoserine (Ser-729). Position 730 is a phosphotyrosine (Tyr-730). Ser-757 bears the Phosphoserine mark. The segment at 759–784 (RDAKSSAESSNATNNNTLGTESKLLP) is disordered. The segment covering 764 to 775 (SAESSNATNNNT) has biased composition (low complexity). Ser-793, Ser-844, and Ser-847 each carry phosphoserine. A disordered region spans residues 846–946 (VSVATEQTKK…GLLHKLKKKL (101 aa)). Position 850 is a phosphothreonine (Thr-850). Positions 859–868 (STKNGPSRSI) are enriched in polar residues. Residues 884-893 (TTTTTTTDAT) show a composition bias toward low complexity. Residues 895–905 (PHHHHHHHRHR) are compositionally biased toward basic residues. A compositionally biased stretch (low complexity) spans 916 to 927 (SKTTESSSSSSA). The span at 931-946 (KPKHKKGLLHKLKKKL) shows a compositional bias: basic residues.

As to quaternary structure, interacts with BTN2.

Its subcellular location is the cell membrane. Its function is as follows. May be involved in ion homeostasis together with BTN1 or BTN2. The sequence is that of Increased sodium tolerance protein 2 (IST2) from Saccharomyces cerevisiae (strain ATCC 204508 / S288c) (Baker's yeast).